The following is a 150-amino-acid chain: Putative solute carrier family 19 member 4 (150 aa).

Residues 118-137 (PSVREGACNEKSTENKKPQD) are disordered. Residues 124-136 (ACNEKSTENKKPQ) are compositionally biased toward basic and acidic residues.

It belongs to the reduced folate carrier (RFC) transporter (TC 2.A.48) family.

The protein is Putative solute carrier family 19 member 4 of Homo sapiens (Human).